The chain runs to 406 residues: Serine hydroxymethyltransferase (406 aa).

Residues Leu-111 and 115 to 117 (GHL) each bind (6S)-5,6,7,8-tetrahydrofolate. Position 220 is an N6-(pyridoxal phosphate)lysine (Lys-220).

The protein belongs to the SHMT family. As to quaternary structure, homodimer. Requires pyridoxal 5'-phosphate as cofactor.

The protein localises to the cytoplasm. It catalyses the reaction (6R)-5,10-methylene-5,6,7,8-tetrahydrofolate + glycine + H2O = (6S)-5,6,7,8-tetrahydrofolate + L-serine. The protein operates within one-carbon metabolism; tetrahydrofolate interconversion. It functions in the pathway amino-acid biosynthesis; glycine biosynthesis; glycine from L-serine: step 1/1. Its function is as follows. Catalyzes the reversible interconversion of serine and glycine with tetrahydrofolate (THF) serving as the one-carbon carrier. This reaction serves as the major source of one-carbon groups required for the biosynthesis of purines, thymidylate, methionine, and other important biomolecules. Also exhibits THF-independent aldolase activity toward beta-hydroxyamino acids, producing glycine and aldehydes, via a retro-aldol mechanism. The sequence is that of Serine hydroxymethyltransferase from Mycoplasma pneumoniae (strain ATCC 29342 / M129 / Subtype 1) (Mycoplasmoides pneumoniae).